The following is a 267-amino-acid chain: 5'-nucleotidase SurE (267 aa).

Residues Asp9, Asp10, Ser40, and Asn97 each contribute to the a divalent metal cation site.

Belongs to the SurE nucleotidase family. Requires a divalent metal cation as cofactor.

The protein resides in the cytoplasm. The catalysed reaction is a ribonucleoside 5'-phosphate + H2O = a ribonucleoside + phosphate. Functionally, nucleotidase that shows phosphatase activity on nucleoside 5'-monophosphates. The sequence is that of 5'-nucleotidase SurE from Helicobacter pylori (strain P12).